A 279-amino-acid polypeptide reads, in one-letter code: Probable endonuclease 4 (279 aa).

His-68, His-108, Glu-143, Asp-177, His-180, His-214, Asp-227, His-229, and Glu-259 together coordinate Zn(2+).

The protein belongs to the AP endonuclease 2 family. It depends on Zn(2+) as a cofactor.

It catalyses the reaction Endonucleolytic cleavage to 5'-phosphooligonucleotide end-products.. Its function is as follows. Endonuclease IV plays a role in DNA repair. It cleaves phosphodiester bonds at apurinic or apyrimidinic (AP) sites, generating a 3'-hydroxyl group and a 5'-terminal sugar phosphate. In Nitrosopumilus maritimus (strain SCM1), this protein is Probable endonuclease 4.